An 800-amino-acid polypeptide reads, in one-letter code: Heterogeneous nuclear ribonucleoprotein U (800 aa).

S2 carries the N-acetylserine modification. S4 is subject to Phosphoserine. Positions 8-42 constitute an SAP domain; the sequence is VKKLKVSELKEELKKRRLSDKGLKADLMDRLQAAL. Residues K17 and K21 each carry the N6-acetyllysine modification. Residues 41–257 form a disordered region; that stretch reads ALDNEAGGRP…PQPPVEEEDE (217 aa). S58 carries the phosphoserine modification. Low complexity-rich tracts occupy residues 71-80 and 103-113; these read AGLEQEAAAG and ENGAAGAADAG. Composition is skewed to acidic residues over residues 114–128 and 134–147; these read AMEE…ENGD and EGED…EGAG. The segment covering 153–173 has biased composition (low complexity); it reads GEQQSQPPAAAAQQQPSQQRG. K181 carries the N6-acetyllysine modification. S182 is modified (ADP-ribosylserine). The span at 194–205 shows a compositional bias: low complexity; sequence APPGARQGQQQA. Residues 209–242 show a composition bias toward basic and acidic residues; it reads GKTEQKGGDKKRGVKRPREDHGRGYFEYIEENKY. At R231 the chain carries Citrulline. K241 is modified (N6-acetyllysine; alternate). A Glycyl lysine isopeptide (Lys-Gly) (interchain with G-Cter in SUMO1); alternate cross-link involves residue K241. Residue K241 forms a Glycyl lysine isopeptide (Lys-Gly) (interchain with G-Cter in SUMO2); alternate linkage. At Y242 the chain carries Phosphotyrosine. 2 positions are modified to phosphoserine: S243 and S247. In terms of domain architecture, B30.2/SPRY spans 244-440; sequence RAKSPQPPVE…VEFNFGQKEK (197 aa). Position 262 is a phosphothreonine (T262). At K328 the chain carries N6-acetyllysine. Residues 464–648 form an ATPase domain region; sequence PKGPEEKKDC…QKLLEQYKEE (185 aa). A Glycyl lysine isopeptide (Lys-Gly) (interchain with G-Cter in SUMO2) cross-link involves residue K471. ATP is bound at residue 480-487; it reads GLPGAGKT. An N6-acetyllysine; alternate mark is found at K492 and K500. Glycyl lysine isopeptide (Lys-Gly) (interchain with G-Cter in SUMO2); alternate cross-links involve residues K492 and K500. Position 508 is a phosphothreonine (T508). K512 is covalently cross-linked (Glycyl lysine isopeptide (Lys-Gly) (interchain with G-Cter in SUMO2)). Residue K527 is modified to N6-acetyllysine. K541 carries the post-translational modification N6-acetyllysine; alternate. K541 participates in a covalent cross-link: Glycyl lysine isopeptide (Lys-Gly) (interchain with G-Cter in SUMO2); alternate. Residue K550 forms a Glycyl lysine isopeptide (Lys-Gly) (interchain with G-Cter in SUMO2) linkage. T558 bears the Phosphothreonine mark. Glycyl lysine isopeptide (Lys-Gly) (interchain with G-Cter in SUMO2) cross-links involve residues K585 and K602. An actin-binding region spans residues 587–602; it reads EDYKQRTQKKAEVEGK. K611 is modified (N6-acetyllysine; alternate). A Glycyl lysine isopeptide (Lys-Gly) (interchain with G-Cter in SUMO2); alternate cross-link involves residue K611. Residues 626 to 653 are a coiled coil; the sequence is DEITYVELQKEEAQKLLEQYKEESKKAL. Glycyl lysine isopeptide (Lys-Gly) (interchain with G-Cter in SUMO2) cross-links involve residues K640 and K646. Residues 647 to 659 show a composition bias toward basic and acidic residues; it reads EESKKALPPEKKQ. The interval 647–729 is disordered; that stretch reads EESKKALPPE…GSGGIGYPYP (83 aa). The residue at position 678 (R678) is an Omega-N-methylarginine. A compositionally biased stretch (gly residues) spans 686–704; that stretch reads GGFNMRGGNFRGGAPGNRG. Residues 690–715 form an RNA-binding RGG-box region; the sequence is MRGGNFRGGAPGNRGGYNRRGNMPQR. R691, R696, and R703 each carry asymmetric dimethylarginine. Asymmetric dimethylarginine; alternate occurs at positions 709 and 715. Omega-N-methylarginine; alternate is present on residues R709 and R715. Gly residues predominate over residues 715–725; sequence RGGGGGSGGIG. Asymmetric dimethylarginine occurs at positions 730 and 737. A disordered region spans residues 745–774; it reads NYNRGGMPNRGNYNQNFRGRGNNRGYKNQS. An N6-acetyllysine; alternate modification is found at K789. K789 is covalently cross-linked (Glycyl lysine isopeptide (Lys-Gly) (interchain with G-Cter in SUMO2); alternate).

In terms of assembly, oligomer (via ATPase domain and RNA-binding RGG-box region); oligomerization occurs upon ATP-binding in a chromatin-associated RNAs (caRNAs)- and transcription-dependent manner and is required for chromatin decompaction. ATP hydrolysis is required to cycle from an oligomeric to monomeric state to compact chromatin. Component of the coding region determinant (CRD)-mediated complex, composed of DHX9, HNRNPU, IGF2BP1, SYNCRIP and YBX1. Identified in the spliceosome C complex. Identified in a IGF2BP1-dependent mRNP granule complex containing untranslated mRNAs. Associates with heterogeneous nuclear ribonucleoprotein (hnRNP) particles. Associates (via middle region) with the C-terminal domain (CTD) RNA polymerase II (Pol II) holoenzyme; this association occurs in a RNA-independent manner. Associates (via middle region) with the core-TFIIH basal transcription factor complex; this association inhibits the CTD phosphorylation of RNA polymerase II holoenzyme by down-regulating TFIIH kinase activity. Associates with the telomerase holoenzyme complex. Associates with spindle microtubules (MTs) in a TPX2-dependent manner. Interacts (via C-terminus) with actin; this interaction is direct and mediates association with the phosphorylated CTD of RNA polymerase II and is disrupted in presence of the long non-coding H19 RNA. Interacts with AURKA. Interacts (via C-terminus) with CBX5; this interaction is, at least in part, RNA-dependent. Interacts with CR2. Interacts with CRY1. Interacts (via C-terminus) with EP300; this interaction enhances DNA-binding to nuclear scaffold/matrix attachment region (S/MAR) elements. Interacts with ERBB4. Interacts with GEMIN5. Interacts with IGF2BP1. Interacts with IGF2BP2 and IGF2BP3. Interacts with NCL; this interaction occurs during mitosis. Interacts (via C-terminus) with NR3C1 (via C-terminus). Interacts with PLK1; this interaction induces phosphorylation of HNRNPU at Ser-58 in mitosis. Interacts with POU3F4. Interacts with SMARCA4; this interaction occurs in embryonic stem cells and stimulates global Pol II-mediated transcription. Interacts (via C-terminus) with TOP2A; this interaction protects the topoisomerase TOP2A from degradation and positively regulates the relaxation of supercoiled DNA by TOP2A in a RNA-dependent manner. Interacts with TPX2; this interaction recruits HNRNPU to spindle microtubules (MTs). Interacts with UBQLN2. Interacts (via RNA-binding RGG-box region) with ZBTB7B; the interaction facilitates the recruitment of long non-coding RNA Blnc1 by ZBTB7B. Interacts with ERCC6. In terms of processing, cleaved at Asp-94 by CASP3 during T-cell apoptosis, resulting in a loss of DNA- and chromatin-binding activities. Post-translationally, extensively phosphorylated. Phosphorylated on Ser-58 by PLK1 and dephosphorylated by protein phosphatase 2A (PP2A) in mitosis. Arg-709 and Arg-715 are dimethylated, probably to asymmetric dimethylarginine. In terms of processing, citrullinated by PADI4.

Its subcellular location is the nucleus. It localises to the nucleus matrix. It is found in the chromosome. The protein resides in the nucleus speckle. The protein localises to the cytoplasm. Its subcellular location is the cytoskeleton. It localises to the microtubule organizing center. It is found in the centrosome. The protein resides in the centromere. The protein localises to the kinetochore. Its subcellular location is the spindle. It localises to the spindle pole. It is found in the midbody. The protein resides in the cell surface. The protein localises to the cytoplasmic granule. Functionally, DNA- and RNA-binding protein involved in several cellular processes such as nuclear chromatin organization, telomere-length regulation, transcription, mRNA alternative splicing and stability, Xist-mediated transcriptional silencing and mitotic cell progression. Plays a role in the regulation of interphase large-scale gene-rich chromatin organization through chromatin-associated RNAs (caRNAs) in a transcription-dependent manner, and thereby maintains genomic stability. Required for the localization of the long non-coding Xist RNA on the inactive chromosome X (Xi) and the subsequent initiation and maintenance of X-linked transcriptional gene silencing during X-inactivation. Plays a role as a RNA polymerase II (Pol II) holoenzyme transcription regulator. Promotes transcription initiation by direct association with the core-TFIIH basal transcription factor complex for the assembly of a functional pre-initiation complex with Pol II in a actin-dependent manner. Blocks Pol II transcription elongation activity by inhibiting the C-terminal domain (CTD) phosphorylation of Pol II and dissociates from Pol II pre-initiation complex prior to productive transcription elongation. Positively regulates CBX5-induced transcriptional gene silencing and retention of CBX5 in the nucleus. Negatively regulates glucocorticoid-mediated transcriptional activation. Key regulator of transcription initiation and elongation in embryonic stem cells upon leukemia inhibitory factor (LIF) signaling. Involved in the long non-coding RNA H19-mediated Pol II transcriptional repression. Participates in the circadian regulation of the core clock component BMAL1 transcription. Plays a role in the regulation of telomere length. Plays a role as a global pre-mRNA alternative splicing modulator by regulating U2 small nuclear ribonucleoprotein (snRNP) biogenesis. Plays a role in mRNA stability. Component of the CRD-mediated complex that promotes MYC mRNA stabilization. Enhances the expression of specific genes, such as tumor necrosis factor TNFA, by regulating mRNA stability, possibly through binding to the 3'-untranslated region (UTR). Plays a role in mitotic cell cycle regulation. Involved in the formation of stable mitotic spindle microtubules (MTs) attachment to kinetochore, spindle organization and chromosome congression. Phosphorylation at Ser-58 by PLK1 is required for chromosome alignement and segregation and progression through mitosis. Also contributes to the targeting of AURKA to mitotic spindle MTs. Binds to double- and single-stranded DNA and RNA, poly(A), poly(C) and poly(G) oligoribonucleotides. Binds to chromatin-associated RNAs (caRNAs). Associates with chromatin to scaffold/matrix attachment region (S/MAR) elements in a chromatin-associated RNAs (caRNAs)-dependent manner. Binds (via RNA-binding RGG-box region) to the long non-coding Xist RNA; this binding is direct and bridges the Xist RNA and the inactive chromosome X (Xi). Binds the long non-coding H19 RNA. Binds to SMN1/2 pre-mRNAs at G/U-rich regions. Binds to small nuclear RNAs (snRNAs). Binds to the 3'-UTR of TNFA mRNA. Also negatively regulates embryonic stem cell differentiation upon LIF signaling. Required for embryonic development. Binds to brown fat long non-coding RNA 1 (Blnc1); facilitates the recruitment of Blnc1 by ZBTB7B required to drive brown and beige fat development and thermogenesis. The protein is Heterogeneous nuclear ribonucleoprotein U of Mus musculus (Mouse).